Here is a 316-residue protein sequence, read N- to C-terminus: Probable cell division protein WhiA (316 aa).

A DNA-binding region (H-T-H motif) is located at residues 275-309; sequence TLKELGEMVASGKISKSGINHRLRKLDEIAEQLRT.

It belongs to the WhiA family.

Involved in cell division and chromosome segregation. The polypeptide is Probable cell division protein WhiA (Bacillus velezensis (strain DSM 23117 / BGSC 10A6 / LMG 26770 / FZB42) (Bacillus amyloliquefaciens subsp. plantarum)).